Consider the following 606-residue polypeptide: tRNA 5-methylaminomethyl-2-thiouridine biosynthesis bifunctional protein MnmC (606 aa).

Residues 1-237 are tRNA (mnm(5)s(2)U34)-methyltransferase; that stretch reads MNSNSSVQFN…KRDMLCGHYL (237 aa). The segment at 254 to 606 is FAD-dependent cmnm(5)s(2)U34 oxidoreductase; it reads IGGGISAACS…RRISVSRFKG (353 aa).

The protein in the N-terminal section; belongs to the methyltransferase superfamily. tRNA (mnm(5)s(2)U34)-methyltransferase family. In the C-terminal section; belongs to the DAO family. Requires FAD as cofactor.

It is found in the cytoplasm. It catalyses the reaction 5-aminomethyl-2-thiouridine(34) in tRNA + S-adenosyl-L-methionine = 5-methylaminomethyl-2-thiouridine(34) in tRNA + S-adenosyl-L-homocysteine + H(+). In terms of biological role, catalyzes the last two steps in the biosynthesis of 5-methylaminomethyl-2-thiouridine (mnm(5)s(2)U) at the wobble position (U34) in tRNA. Catalyzes the FAD-dependent demodification of cmnm(5)s(2)U34 to nm(5)s(2)U34, followed by the transfer of a methyl group from S-adenosyl-L-methionine to nm(5)s(2)U34, to form mnm(5)s(2)U34. This Idiomarina loihiensis (strain ATCC BAA-735 / DSM 15497 / L2-TR) protein is tRNA 5-methylaminomethyl-2-thiouridine biosynthesis bifunctional protein MnmC.